Reading from the N-terminus, the 1696-residue chain is uncharacterized protein (1696 aa).

Disordered regions lie at residues 1–113 (MDSS…HPQY), 151–194 (DSWT…SRSR), 258–284 (DVTR…PEKK), and 299–376 (GRRE…KQRG). Residues 21-42 (LHPPSAPLPPPPPLPPPPPPRQ) are compositionally biased toward pro residues. Polar residues predominate over residues 52-61 (GRSTQSNGQR). Low complexity predominate over residues 96-113 (QQQHQPLSLQQQQQHPQY). Residues 170 to 183 (RNYQYDYSRNSSGV) are compositionally biased toward polar residues. Composition is skewed to basic and acidic residues over residues 267-284 (EGAR…PEKK), 325-340 (ETPR…EWSR), and 358-376 (RGKE…KQRG). Phosphoserine is present on Ser-378. Disordered regions lie at residues 419 to 483 (RALL…GGKL), 688 to 724 (SDIG…LDSP), 1063 to 1090 (IKHK…GGTS), 1184 to 1211 (TSKS…VAGS), 1319 to 1340 (GEAV…SGVR), 1361 to 1429 (VVSV…SDAS), and 1658 to 1696 (SESR…DSGM). Basic and acidic residues-rich tracts occupy residues 421 to 436 (LLSD…ERNG) and 695 to 704 (DDNKRIDKNV). Ser-708 carries the post-translational modification Phosphoserine. Residues 1184 to 1204 (TSKSIEKIESSGGTSEHRTPE) show a composition bias toward basic and acidic residues. Basic and acidic residues predominate over residues 1361–1370 (VVSVPHRDPQ). Polar residues-rich tracts occupy residues 1389–1398 (NYSTQKSYPS), 1658–1667 (SESRCNQSIS), and 1677–1696 (SAAN…DSGM).

This is an uncharacterized protein from Arabidopsis thaliana (Mouse-ear cress).